Consider the following 506-residue polypeptide: Exopolyphosphatase (506 aa).

Belongs to the GppA/Ppx family. As to quaternary structure, homodimer. Requires Mg(2+) as cofactor.

The protein localises to the cell membrane. The catalysed reaction is [phosphate](n) + H2O = [phosphate](n-1) + phosphate + H(+). The enzyme catalyses [phosphate](n) + ATP = [phosphate](n+1) + ADP. Its activity is regulated as follows. Exopolyphosphatase activity is stimulated by NH(4)(+) and K(+). Phosphotransferase activity is insensitive to the addition of K(+) or NH(4)(+) ions. In terms of biological role, degradation of inorganic polyphosphates (polyP). Releases orthophosphate processively from the ends of the polyP chain. Also has polyphosphate:ADP phosphotransferase activity, catalyzing the production of ATP from ADP and polyP. This chain is Exopolyphosphatase, found in Pseudomonas aeruginosa (strain ATCC 15692 / DSM 22644 / CIP 104116 / JCM 14847 / LMG 12228 / 1C / PRS 101 / PAO1).